A 291-amino-acid polypeptide reads, in one-letter code: 4-hydroxy-tetrahydrodipicolinate synthase (291 aa).

Residue Thr44 coordinates pyruvate. The active-site Proton donor/acceptor is the Tyr132. The Schiff-base intermediate with substrate role is filled by Lys160. Residue Ile202 coordinates pyruvate.

Belongs to the DapA family. Homotetramer; dimer of dimers.

The protein resides in the cytoplasm. It carries out the reaction L-aspartate 4-semialdehyde + pyruvate = (2S,4S)-4-hydroxy-2,3,4,5-tetrahydrodipicolinate + H2O + H(+). It functions in the pathway amino-acid biosynthesis; L-lysine biosynthesis via DAP pathway; (S)-tetrahydrodipicolinate from L-aspartate: step 3/4. Its function is as follows. Catalyzes the condensation of (S)-aspartate-beta-semialdehyde [(S)-ASA] and pyruvate to 4-hydroxy-tetrahydrodipicolinate (HTPA). The protein is 4-hydroxy-tetrahydrodipicolinate synthase of Rhodospirillum centenum (strain ATCC 51521 / SW).